The sequence spans 893 residues: Nitrate reductase [NADPH] (893 aa).

The segment at 1–83 (MSVTTQQPAV…KPTPDAHVPR (83 aa)) is disordered. Residues 55–65 (PDFPLPPPANP) show a composition bias toward pro residues. Basic and acidic residues predominate over residues 71-83 (DIDKPTPDAHVPR). Cys-170 contributes to the Mo-molybdopterin binding site. A Cytochrome b5 heme-binding domain is found at 536-611 (NRIVELDELK…MPAYHIGTLS (76 aa)). Positions 571 and 594 each coordinate heme. An FAD-binding FR-type domain is found at 641–752 (RTWSKALLSS…KGPIGKFEYL (112 aa)). Residues 695–698 (RSYT), 712–716 (LIKIY), 726–728 (KMT), Ser-776, and Thr-779 each bind FAD. Position 863-872 (863-872 (LVLVCGPEGL)) interacts with NADP(+).

This sequence belongs to the nitrate reductase family. As to quaternary structure, homodimer. Requires FAD as cofactor. Heme is required as a cofactor. It depends on Mo-molybdopterin as a cofactor.

It carries out the reaction nitrite + NADP(+) + H2O = nitrate + NADPH + H(+). In terms of biological role, nitrate reductase is a key enzyme involved in the first step of nitrate assimilation in plants, fungi and bacteria. The protein is Nitrate reductase [NADPH] (NIAD) of Leptosphaeria maculans (Blackleg fungus).